The primary structure comprises 402 residues: 4-hydroxy-3-methylbut-2-enyl diphosphate reductase (402 aa).

Cysteine 66 lines the [4Fe-4S] cluster pocket. Histidine 96 contributes to the (2E)-4-hydroxy-3-methylbut-2-enyl diphosphate binding site. Residue histidine 96 coordinates dimethylallyl diphosphate. Position 96 (histidine 96) interacts with isopentenyl diphosphate. [4Fe-4S] cluster is bound at residue cysteine 157. Histidine 185 contacts (2E)-4-hydroxy-3-methylbut-2-enyl diphosphate. Dimethylallyl diphosphate is bound at residue histidine 185. Histidine 185 provides a ligand contact to isopentenyl diphosphate. Glutamate 187 (proton donor) is an active-site residue. Threonine 250 serves as a coordination point for (2E)-4-hydroxy-3-methylbut-2-enyl diphosphate. Residue cysteine 288 coordinates [4Fe-4S] cluster. 4 residues coordinate (2E)-4-hydroxy-3-methylbut-2-enyl diphosphate: serine 317, serine 318, asparagine 319, and serine 379. Serine 317, serine 318, asparagine 319, and serine 379 together coordinate dimethylallyl diphosphate. Residues serine 317, serine 318, asparagine 319, and serine 379 each contribute to the isopentenyl diphosphate site.

It belongs to the IspH family. [4Fe-4S] cluster is required as a cofactor.

It carries out the reaction isopentenyl diphosphate + 2 oxidized [2Fe-2S]-[ferredoxin] + H2O = (2E)-4-hydroxy-3-methylbut-2-enyl diphosphate + 2 reduced [2Fe-2S]-[ferredoxin] + 2 H(+). The enzyme catalyses dimethylallyl diphosphate + 2 oxidized [2Fe-2S]-[ferredoxin] + H2O = (2E)-4-hydroxy-3-methylbut-2-enyl diphosphate + 2 reduced [2Fe-2S]-[ferredoxin] + 2 H(+). Its pathway is isoprenoid biosynthesis; dimethylallyl diphosphate biosynthesis; dimethylallyl diphosphate from (2E)-4-hydroxy-3-methylbutenyl diphosphate: step 1/1. It functions in the pathway isoprenoid biosynthesis; isopentenyl diphosphate biosynthesis via DXP pathway; isopentenyl diphosphate from 1-deoxy-D-xylulose 5-phosphate: step 6/6. In terms of biological role, catalyzes the conversion of 1-hydroxy-2-methyl-2-(E)-butenyl 4-diphosphate (HMBPP) into a mixture of isopentenyl diphosphate (IPP) and dimethylallyl diphosphate (DMAPP). Acts in the terminal step of the DOXP/MEP pathway for isoprenoid precursor biosynthesis. This Nostoc sp. (strain PCC 7120 / SAG 25.82 / UTEX 2576) protein is 4-hydroxy-3-methylbut-2-enyl diphosphate reductase.